The sequence spans 192 residues: Transcription termination/antitermination protein NusG (192 aa).

The protein belongs to the NusG family.

Its function is as follows. Participates in transcription elongation, termination and antitermination. The chain is Transcription termination/antitermination protein NusG from Rickettsia prowazekii (strain Madrid E).